Here is a 46-residue protein sequence, read N- to C-terminus: Light-harvesting protein B800/850/890 alpha-1 chain (46 aa).

At 1–12 the chain is on the cytoplasmic side; it reads MWRLWKLYDPRR. A helical transmembrane segment spans residues 13-33; the sequence is VLIGIFSWLAVLALVIHFILL. Residue histidine 29 coordinates a bacteriochlorophyll. Residues 34-46 are Periplasmic-facing; sequence STDRFNWVGGAAN.

It belongs to the antenna complex alpha subunit family. As to quaternary structure, the core complex is formed by different alpha and beta chains, binding bacteriochlorophyll molecules, and arranged most probably in tetrameric structures disposed around the reaction center. The non-pigmented gamma chains may constitute additional components.

It localises to the cell inner membrane. Antenna complexes are light-harvesting systems, which transfer the excitation energy to the reaction centers. The chain is Light-harvesting protein B800/850/890 alpha-1 chain from Halorhodospira halophila (strain DSM 244 / SL1) (Ectothiorhodospira halophila (strain DSM 244 / SL1)).